Here is a 339-residue protein sequence, read N- to C-terminus: Scoulerine-9-O-methyltransferase 3 (339 aa).

Methionine 161 contributes to the S-adenosyl-L-methionine binding site. Aspartate 164 lines the substrate pocket. S-adenosyl-L-methionine-binding positions include threonine 165, glycine 191, aspartate 214, 228-229, and lysine 242; that span reads DV. 243-247 lines the substrate pocket; sequence SILHE. Residue histidine 246 is the Proton acceptor of the active site.

The protein belongs to the class I-like SAM-binding methyltransferase superfamily. Cation-independent O-methyltransferase family. COMT subfamily. Homodimer. Forms heterodimer with SOMT2. The heterodimer SOMT2-SOMT3 possesses 3-O-acetyl-4'-O-demethylpapaveroxine 4'-O-methyltransferase activity, where SOMT2 is the catalytic subunit. As to expression, highly expressed in capsules. Expressed is stems. Expressed at low levels in roots.

It catalyses the reaction (S)-scoulerine + S-adenosyl-L-methionine = (S)-tetrahydrocolumbamine + S-adenosyl-L-homocysteine + H(+). It functions in the pathway alkaloid biosynthesis. Its function is as follows. Methyltransferase involved in the biosynthesis of the benzylisoquinoline alkaloid noscapine. Catalyzes the conversion of (S)-scoulerine to (S)-tetrahydrocolumbamine. The sequence is that of Scoulerine-9-O-methyltransferase 3 from Papaver somniferum (Opium poppy).